The sequence spans 349 residues: Phosphoribosylformylglycinamidine cyclo-ligase (349 aa).

Belongs to the AIR synthase family.

It localises to the cytoplasm. It carries out the reaction 2-formamido-N(1)-(5-O-phospho-beta-D-ribosyl)acetamidine + ATP = 5-amino-1-(5-phospho-beta-D-ribosyl)imidazole + ADP + phosphate + H(+). It functions in the pathway purine metabolism; IMP biosynthesis via de novo pathway; 5-amino-1-(5-phospho-D-ribosyl)imidazole from N(2)-formyl-N(1)-(5-phospho-D-ribosyl)glycinamide: step 2/2. In Listeria monocytogenes serovar 1/2a (strain ATCC BAA-679 / EGD-e), this protein is Phosphoribosylformylglycinamidine cyclo-ligase.